The sequence spans 338 residues: Glycerol-3-phosphate dehydrogenase [NAD(P)+] (338 aa).

Residues Ser13, Trp14, and Lys108 each contribute to the NADPH site. Residues Lys108, Gly139, and Ser141 each coordinate sn-glycerol 3-phosphate. Ala143 contacts NADPH. Sn-glycerol 3-phosphate contacts are provided by Lys194, Asp247, Ser257, Arg258, and Asn259. Residue Lys194 is the Proton acceptor of the active site. Residue Arg258 coordinates NADPH. Residues Val282 and Glu284 each coordinate NADPH.

It belongs to the NAD-dependent glycerol-3-phosphate dehydrogenase family.

Its subcellular location is the cytoplasm. It carries out the reaction sn-glycerol 3-phosphate + NAD(+) = dihydroxyacetone phosphate + NADH + H(+). The enzyme catalyses sn-glycerol 3-phosphate + NADP(+) = dihydroxyacetone phosphate + NADPH + H(+). It functions in the pathway membrane lipid metabolism; glycerophospholipid metabolism. Catalyzes the reduction of the glycolytic intermediate dihydroxyacetone phosphate (DHAP) to sn-glycerol 3-phosphate (G3P), the key precursor for phospholipid synthesis. The sequence is that of Glycerol-3-phosphate dehydrogenase [NAD(P)+] from Listeria monocytogenes serotype 4a (strain HCC23).